The primary structure comprises 148 residues: Lysozyme C (148 aa).

The signal sequence occupies residues 1-18 (MKVLILLGLVLLSVMVQG). Positions 19 to 148 (KVFERCELAR…VSQYIQGCGV (130 aa)) constitute a C-type lysozyme domain. 4 disulfide bridges follow: Cys24/Cys146, Cys48/Cys134, Cys83/Cys99, and Cys95/Cys113. Catalysis depends on residues Glu53 and Asp71.

This sequence belongs to the glycosyl hydrolase 22 family. Monomer.

The protein resides in the secreted. It catalyses the reaction Hydrolysis of (1-&gt;4)-beta-linkages between N-acetylmuramic acid and N-acetyl-D-glucosamine residues in a peptidoglycan and between N-acetyl-D-glucosamine residues in chitodextrins.. In terms of biological role, lysozymes have primarily a bacteriolytic function; those in tissues and body fluids are associated with the monocyte-macrophage system and enhance the activity of immunoagents. The chain is Lysozyme C (LYZ) from Saguinus oedipus (Cotton-top tamarin).